Consider the following 240-residue polypeptide: Regulatory protein SdiA (240 aa).

Residues valine 173–glycine 238 form the HTH luxR-type domain. Residues serine 197 to lysine 216 constitute a DNA-binding region (H-T-H motif).

Its function is as follows. Activates cell division by specifically increasing transcription from one of the two promoters that lie immediately upstream of the ftsQAZ gene cluster. Activates ydiV expression in response to extracellular autoinducer AI-1 (Vibrio fischeri autoinducer oxoC6). The chain is Regulatory protein SdiA (sdiA) from Escherichia coli (strain K12).